The following is a 39-amino-acid chain: Small basic protein 1 (39 aa).

At Gln1 the chain carries Pyrrolidone carboxylic acid. Cystine bridges form between Cys6–Cys32, Cys10–Cys26, and Cys14–Cys31.

It is found in the secreted. The polypeptide is Small basic protein 1 (Anas platyrhynchos (Mallard)).